The chain runs to 49 residues: uncharacterized protein (49 aa).

The chain crosses the membrane as a helical span at residues 17–39; it reads LLVFDTSLYIPPFMLSFIGYSLS.

The protein localises to the membrane. This is an uncharacterized protein from Saccharomyces cerevisiae (strain ATCC 204508 / S288c) (Baker's yeast).